A 79-amino-acid chain; its full sequence is Dermaseptin-S8 (79 aa).

The signal sequence occupies residues 1–22 (MDILKKSLFLVLFLGLVSLSIC). The propeptide occupies 23 to 45 (EEEKRENEDEEKQEDDEQSEMKR). Gln-76 bears the Glutamine amide mark. The propeptide occupies 78-79 (AQ).

This sequence belongs to the frog skin active peptide (FSAP) family. Dermaseptin subfamily. As to expression, expressed by the skin glands.

It localises to the secreted. In terms of biological role, potent antimicrobial peptide with activity against bacteria, fungi and protozoa. Probably acts by disturbing membrane functions with its amphipathic structure. The protein is Dermaseptin-S8 of Phyllomedusa sauvagei (Sauvage's leaf frog).